We begin with the raw amino-acid sequence, 300 residues long: Geranylgeranyl pyrophosphate synthase (300 aa).

Methionine 1 carries the post-translational modification N-acetylmethionine. 3 residues coordinate isopentenyl diphosphate: lysine 25, arginine 28, and histidine 57. Residues aspartate 64 and aspartate 68 each contribute to the Mg(2+) site. Arginine 73 contacts dimethylallyl diphosphate. Arginine 74 serves as a coordination point for isopentenyl diphosphate. The dimethylallyl diphosphate site is built by lysine 151, threonine 152, glutamine 185, lysine 202, and lysine 212.

This sequence belongs to the FPP/GGPP synthase family. As to quaternary structure, homohexamer; trimer of homodimers. Mg(2+) serves as cofactor.

It is found in the cytoplasm. The protein resides in the perinuclear region. It localises to the myofibril. The protein localises to the sarcomere. Its subcellular location is the z line. It catalyses the reaction isopentenyl diphosphate + dimethylallyl diphosphate = (2E)-geranyl diphosphate + diphosphate. The enzyme catalyses isopentenyl diphosphate + (2E)-geranyl diphosphate = (2E,6E)-farnesyl diphosphate + diphosphate. The catalysed reaction is isopentenyl diphosphate + (2E,6E)-farnesyl diphosphate = (2E,6E,10E)-geranylgeranyl diphosphate + diphosphate. It participates in isoprenoid biosynthesis; farnesyl diphosphate biosynthesis; farnesyl diphosphate from geranyl diphosphate and isopentenyl diphosphate: step 1/1. It functions in the pathway isoprenoid biosynthesis; geranyl diphosphate biosynthesis; geranyl diphosphate from dimethylallyl diphosphate and isopentenyl diphosphate: step 1/1. Its pathway is isoprenoid biosynthesis; geranylgeranyl diphosphate biosynthesis; geranylgeranyl diphosphate from farnesyl diphosphate and isopentenyl diphosphate: step 1/1. Functionally, catalyzes the trans-addition of the three molecules of isopentenyl diphosphate (IPP) onto dimethylallyl pyrophosphate (DMAPP) to form geranylgeranyl pyrophosphate, an important precursor of carotenoids and geranylated proteins. The sequence is that of Geranylgeranyl pyrophosphate synthase from Mus musculus (Mouse).